We begin with the raw amino-acid sequence, 398 residues long: Succinate--CoA ligase [ADP-forming] subunit beta (398 aa).

In terms of domain architecture, ATP-grasp spans 9 to 253 (KQVLAKYGVA…ESEEDPAELE (245 aa)). Residues Lys-46, 53–55 (GRG), Glu-108, Cys-111, and Glu-116 contribute to the ATP site. Asn-208 and Asp-222 together coordinate Mg(2+). Residues Asn-273 and 330-332 (GIM) contribute to the substrate site.

Belongs to the succinate/malate CoA ligase beta subunit family. In terms of assembly, heterotetramer of two alpha and two beta subunits. Mg(2+) is required as a cofactor.

It carries out the reaction succinate + ATP + CoA = succinyl-CoA + ADP + phosphate. The catalysed reaction is GTP + succinate + CoA = succinyl-CoA + GDP + phosphate. It participates in carbohydrate metabolism; tricarboxylic acid cycle; succinate from succinyl-CoA (ligase route): step 1/1. Its function is as follows. Succinyl-CoA synthetase functions in the citric acid cycle (TCA), coupling the hydrolysis of succinyl-CoA to the synthesis of either ATP or GTP and thus represents the only step of substrate-level phosphorylation in the TCA. The beta subunit provides nucleotide specificity of the enzyme and binds the substrate succinate, while the binding sites for coenzyme A and phosphate are found in the alpha subunit. This chain is Succinate--CoA ligase [ADP-forming] subunit beta, found in Paramagnetospirillum magneticum (strain ATCC 700264 / AMB-1) (Magnetospirillum magneticum).